The sequence spans 294 residues: 4-hydroxy-tetrahydrodipicolinate synthase (294 aa).

Position 44 (threonine 44) interacts with pyruvate. The active-site Proton donor/acceptor is the tyrosine 132. Lysine 160 functions as the Schiff-base intermediate with substrate in the catalytic mechanism. Isoleucine 205 is a binding site for pyruvate.

Belongs to the DapA family. In terms of assembly, homotetramer; dimer of dimers.

Its subcellular location is the cytoplasm. It carries out the reaction L-aspartate 4-semialdehyde + pyruvate = (2S,4S)-4-hydroxy-2,3,4,5-tetrahydrodipicolinate + H2O + H(+). Its pathway is amino-acid biosynthesis; L-lysine biosynthesis via DAP pathway; (S)-tetrahydrodipicolinate from L-aspartate: step 3/4. Functionally, catalyzes the condensation of (S)-aspartate-beta-semialdehyde [(S)-ASA] and pyruvate to 4-hydroxy-tetrahydrodipicolinate (HTPA). The chain is 4-hydroxy-tetrahydrodipicolinate synthase from Kosmotoga olearia (strain ATCC BAA-1733 / DSM 21960 / TBF 19.5.1).